A 431-amino-acid polypeptide reads, in one-letter code: Beta-lactamase hydrolase-like protein (431 aa).

Zn(2+) contacts are provided by His212, His214, and His286. Asp309 serves as a coordination point for substrate.

This sequence belongs to the metallo-beta-lactamase superfamily. Zn(2+) is required as a cofactor.

Its function is as follows. Could play a role in cell adherence or biofilm development. The sequence is that of Beta-lactamase hydrolase-like protein from Xylella fastidiosa (strain Temecula1 / ATCC 700964).